Consider the following 458-residue polypeptide: MSTGTVVQVIGAVVDVEFPHDAVPQIYDALEIKSEGLVLEVQQQLGGGVVRTIAMGTSDGLRRGLEVVNSGSPISVPVGSATLGRIMNVLGDPIDECGEIGEQERYVIHREAPSYEDQSSSTELLETGIKVIDLVCPFAKGGKVGLFGGAGVGKTVNMMELINNIAKAHSGLSVFAGVGERTREGNDFYYEMKDSGVLDKVAMVYGQMNEPPGNRLRVALTGLTMAEKFRDEGKDVLFFVDNIYRYTLAGTEVSALLGRMPSAVGYQPTLAEEMGVLQERITSTKTGSITSVQAVYVPADDLTDPSPATTFAHLDATVVLSRNIASMGIYPAVDPLDSTSRQLDPLVVGQEHYDVASGVQTVLQRYKELKDIIAILGMDELSDEDKTTVARARKIEKYLSQPFFVAEVFTGSPGKYVSLKDTIRGFKGILEGEFDHLPEQAFYMVGSIDEAVEKANKK.

148-155 (GGAGVGKT) provides a ligand contact to ATP.

Belongs to the ATPase alpha/beta chains family. In terms of assembly, F-type ATPases have 2 components, CF(1) - the catalytic core - and CF(0) - the membrane proton channel. CF(1) has five subunits: alpha(3), beta(3), gamma(1), delta(1), epsilon(1). CF(0) has three main subunits: a(1), b(2) and c(9-12). The alpha and beta chains form an alternating ring which encloses part of the gamma chain. CF(1) is attached to CF(0) by a central stalk formed by the gamma and epsilon chains, while a peripheral stalk is formed by the delta and b chains.

It is found in the cell inner membrane. The enzyme catalyses ATP + H2O + 4 H(+)(in) = ADP + phosphate + 5 H(+)(out). Functionally, produces ATP from ADP in the presence of a proton gradient across the membrane. The catalytic sites are hosted primarily by the beta subunits. The polypeptide is ATP synthase subunit beta (Shewanella halifaxensis (strain HAW-EB4)).